Here is a 212-residue protein sequence, read N- to C-terminus: uncharacterized protein (212 aa).

The protein belongs to the methyltransferase superfamily.

This is an uncharacterized protein from Synechocystis sp. (strain ATCC 27184 / PCC 6803 / Kazusa).